Reading from the N-terminus, the 507-residue chain is GMP synthase [glutamine-hydrolyzing] (507 aa).

The Glutamine amidotransferase type-1 domain maps to 3-190 (KILVIDYGSQ…IQGICGLKGS (188 aa)). Residue C77 is the Nucleophile of the active site. Active-site residues include H164 and E166. In terms of domain architecture, GMPS ATP-PPase spans 191–382 (WTLMDFVENK…LGLPREILYR (192 aa)). 218–224 (SGGVDSS) contributes to the ATP binding site.

As to quaternary structure, homodimer.

It catalyses the reaction XMP + L-glutamine + ATP + H2O = GMP + L-glutamate + AMP + diphosphate + 2 H(+). It functions in the pathway purine metabolism; GMP biosynthesis; GMP from XMP (L-Gln route): step 1/1. Functionally, catalyzes the synthesis of GMP from XMP. In Petrotoga mobilis (strain DSM 10674 / SJ95), this protein is GMP synthase [glutamine-hydrolyzing].